The chain runs to 193 residues: N-(5'-phosphoribosyl)anthranilate isomerase (193 aa).

This sequence belongs to the TrpF family.

It catalyses the reaction N-(5-phospho-beta-D-ribosyl)anthranilate = 1-(2-carboxyphenylamino)-1-deoxy-D-ribulose 5-phosphate. It functions in the pathway amino-acid biosynthesis; L-tryptophan biosynthesis; L-tryptophan from chorismate: step 3/5. The sequence is that of N-(5'-phosphoribosyl)anthranilate isomerase from Streptococcus mutans serotype c (strain ATCC 700610 / UA159).